A 192-amino-acid polypeptide reads, in one-letter code: MAP6 domain-containing protein 1 (192 aa).

Residues C5, C10, and C11 are each lipidated (S-palmitoyl cysteine). The disordered stretch occupies residues L36 to R106. S38 carries the post-translational modification Phosphoserine. A compositionally biased stretch (low complexity) spans P43–R58. Mn regions lie at residues T123–V136 and D158–V170. S160 carries the post-translational modification Phosphoserine.

The protein belongs to the STOP family. Interacts with calmodulin. Palmitoylated. Palmitoylation enhances association with microtubules.

The protein resides in the golgi apparatus. The protein localises to the cytoplasm. Its subcellular location is the cytoskeleton. May have microtubule-stabilizing activity. The polypeptide is MAP6 domain-containing protein 1 (MAP6D1) (Bos taurus (Bovine)).